A 202-amino-acid chain; its full sequence is Small ribosomal subunit protein uS4c (202 aa).

The S4 RNA-binding domain occupies 90–158; the sequence is MRLDNIIFRL…MKRSRDSYEK (69 aa).

Belongs to the universal ribosomal protein uS4 family. Part of the 30S ribosomal subunit. Contacts protein S5. The interaction surface between S4 and S5 is involved in control of translational fidelity.

It is found in the plastid. It localises to the chloroplast. One of the primary rRNA binding proteins, it binds directly to 16S rRNA where it nucleates assembly of the body of the 30S subunit. Functionally, with S5 and S12 plays an important role in translational accuracy. The protein is Small ribosomal subunit protein uS4c (rps4) of Anthoceros angustus (Hornwort).